Reading from the N-terminus, the 320-residue chain is FHA domain-containing protein FHA2 (320 aa).

Ala2 carries the post-translational modification N-acetylalanine. The FHA domain maps to 32–89; the sequence is IILGRNSKKATVDVDLSSLGGGMNISRNHARIFYDFTRRRFSLEVLGKNGCLVEGVLH. Positions 138–211 are disordered; it reads VPYHNYQSGP…REGRSKVDRE (74 aa). The segment covering 163-178 has biased composition (acidic residues); the sequence is EYDDEDDDDDDDEEDD. Residues 198 to 210 show a composition bias toward basic and acidic residues; the sequence is GEKKREGRSKVDR.

In terms of tissue distribution, widely expressed.

The protein localises to the nucleus. Its function is as follows. May play a role in the control of plant organ development and specifically in the regulation of stamen development. Does not show transactivation activity in yeast. This is FHA domain-containing protein FHA2 from Arabidopsis thaliana (Mouse-ear cress).